The chain runs to 434 residues: (3,5-dihydroxyphenyl)acetyl-CoA 1,2-dioxygenase (434 aa).

Substrate-binding positions include D184, E190, 223-226 (HPRY), 234-239 (AGINLK), G293, 322-324 (IPG), and Q413.

This sequence belongs to the enoyl-CoA hydratase/isomerase family. Homohexamer; dimer of trimers.

It catalyses the reaction (3,5-dihydroxyphenyl)acetyl-CoA + O2 = 2-(3,5-dihydroxyphenyl)-2-oxoacetate + CoA + H(+). Functionally, involved in the biosynthesis of the nonproteinogenic amino acid monomer (S)-3,5-dihydroxyphenylglycine (Dpg) responsible of the production of vancomycin and teicoplanin antibiotics. Catalyzes the unusual conversion 3,5-dihydroxyphenylacetyl-CoA (DPA-CoA) to 3,5-dihydroxyphenylglyoxylate. DpgC performed a net four-electron oxidation of the benzylic carbon of DPA-CoA and the hydrolysis of the thioester bond to generate free CoA. It can also use phenylacetyl-CoA (PA-CoA) as substrate. This Amycolatopsis orientalis (Nocardia orientalis) protein is (3,5-dihydroxyphenyl)acetyl-CoA 1,2-dioxygenase (dpgC).